A 1436-amino-acid polypeptide reads, in one-letter code: DNA-directed RNA polymerase subunit beta' (1436 aa).

C70, C72, C85, and C88 together coordinate Zn(2+). D481, D483, and D485 together coordinate Mg(2+). The Zn(2+) site is built by C829, C903, C910, and C913.

This sequence belongs to the RNA polymerase beta' chain family. As to quaternary structure, the RNAP catalytic core consists of 2 alpha, 1 beta, 1 beta' and 1 omega subunit. When a sigma factor is associated with the core the holoenzyme is formed, which can initiate transcription. It depends on Mg(2+) as a cofactor. Zn(2+) serves as cofactor.

The catalysed reaction is RNA(n) + a ribonucleoside 5'-triphosphate = RNA(n+1) + diphosphate. DNA-dependent RNA polymerase catalyzes the transcription of DNA into RNA using the four ribonucleoside triphosphates as substrates. The protein is DNA-directed RNA polymerase subunit beta' of Flavobacterium johnsoniae (strain ATCC 17061 / DSM 2064 / JCM 8514 / BCRC 14874 / CCUG 350202 / NBRC 14942 / NCIMB 11054 / UW101) (Cytophaga johnsonae).